The sequence spans 329 residues: Peroxidase 18 (329 aa).

A signal peptide spans 1–29 (MALQFFSCKPKYTFLSSLLLLLLLSSSVA). 4 disulfide bridges follow: Cys-40–Cys-116, Cys-73–Cys-78, Cys-122–Cys-325, and Cys-201–Cys-235. The Proton acceptor role is filled by His-71. Residues Asp-72, Val-75, Gly-77, Asp-79, and Ser-81 each coordinate Ca(2+). A glycan (N-linked (GlcNAc...) asparagine) is linked at Asn-87. Ile-164 is a substrate binding site. His-194 lines the heme b pocket. Position 195 (Thr-195) interacts with Ca(2+). Ca(2+)-binding residues include Asp-249, Thr-252, and Asp-257.

The protein belongs to the peroxidase family. Classical plant (class III) peroxidase subfamily. Requires heme b as cofactor. Ca(2+) serves as cofactor.

It is found in the secreted. It catalyses the reaction 2 a phenolic donor + H2O2 = 2 a phenolic radical donor + 2 H2O. In terms of biological role, removal of H(2)O(2), oxidation of toxic reductants, biosynthesis and degradation of lignin, suberization, auxin catabolism, response to environmental stresses such as wounding, pathogen attack and oxidative stress. These functions might be dependent on each isozyme/isoform in each plant tissue. In Arabidopsis thaliana (Mouse-ear cress), this protein is Peroxidase 18 (PER18).